The chain runs to 206 residues: Small ribosomal subunit protein uS2 (206 aa).

Belongs to the universal ribosomal protein uS2 family.

This Methanothrix thermoacetophila (strain DSM 6194 / JCM 14653 / NBRC 101360 / PT) (Methanosaeta thermophila) protein is Small ribosomal subunit protein uS2.